The chain runs to 20 residues: N-acetyl-D-galactosamine-binding lectin subunit B (20 aa).

In terms of assembly, disulfide-linked heterodimer of A and B chains.

Functionally, gal / GalNAc-specific lectin. Agglutinates both native and trypsin-treated rabbit erythrocytes but not human erythrocytes irrespective of blood group type. The sequence is that of N-acetyl-D-galactosamine-binding lectin subunit B from Iris hollandica (Dutch iris).